Reading from the N-terminus, the 224-residue chain is Phosphoribosylformylglycinamidine synthase subunit PurQ (224 aa).

Positions 1 to 224 constitute a Glutamine amidotransferase type-1 domain; sequence MIAIIKFPGT…ILLRRLGEWA (224 aa). Cysteine 84 serves as the catalytic Nucleophile. Residues histidine 196 and glutamate 198 contribute to the active site.

In terms of assembly, part of the FGAM synthase complex composed of 1 PurL, 1 PurQ and 2 PurS subunits.

The protein resides in the cytoplasm. The enzyme catalyses N(2)-formyl-N(1)-(5-phospho-beta-D-ribosyl)glycinamide + L-glutamine + ATP + H2O = 2-formamido-N(1)-(5-O-phospho-beta-D-ribosyl)acetamidine + L-glutamate + ADP + phosphate + H(+). It catalyses the reaction L-glutamine + H2O = L-glutamate + NH4(+). It functions in the pathway purine metabolism; IMP biosynthesis via de novo pathway; 5-amino-1-(5-phospho-D-ribosyl)imidazole from N(2)-formyl-N(1)-(5-phospho-D-ribosyl)glycinamide: step 1/2. Part of the phosphoribosylformylglycinamidine synthase complex involved in the purines biosynthetic pathway. Catalyzes the ATP-dependent conversion of formylglycinamide ribonucleotide (FGAR) and glutamine to yield formylglycinamidine ribonucleotide (FGAM) and glutamate. The FGAM synthase complex is composed of three subunits. PurQ produces an ammonia molecule by converting glutamine to glutamate. PurL transfers the ammonia molecule to FGAR to form FGAM in an ATP-dependent manner. PurS interacts with PurQ and PurL and is thought to assist in the transfer of the ammonia molecule from PurQ to PurL. The sequence is that of Phosphoribosylformylglycinamidine synthase subunit PurQ from Saccharolobus solfataricus (strain ATCC 35092 / DSM 1617 / JCM 11322 / P2) (Sulfolobus solfataricus).